Reading from the N-terminus, the 340-residue chain is Ubiquitin-like domain-containing CTD phosphatase (340 aa).

One can recognise a Ubiquitin-like domain in the interval 24 to 101 (LTLTVKWNGK…MTMIGTVEDD (78 aa)). In terms of domain architecture, FCP1 homology spans 151–312 (CRQGKKLLVL…VKLTQYLLTI (162 aa)). Residues 151-312 (CRQGKKLLVL…VKLTQYLLTI (162 aa)) are phosphatase. The Mg(2+) site is built by D161, D163, and D271.

It depends on Mg(2+) as a cofactor.

The protein localises to the nucleus. It carries out the reaction O-phospho-L-seryl-[protein] + H2O = L-seryl-[protein] + phosphate. The catalysed reaction is O-phospho-L-threonyl-[protein] + H2O = L-threonyl-[protein] + phosphate. Functionally, dephosphorylates 26S nuclear proteasomes, thereby decreasing their proteolytic activity. The dephosphorylation may prevent assembly of the core and regulatory particles (CP and RP) into mature 26S proteasome. This Arabidopsis thaliana (Mouse-ear cress) protein is Ubiquitin-like domain-containing CTD phosphatase.